The primary structure comprises 380 residues: Histidinol-phosphate aminotransferase 1 (380 aa).

The residue at position 235 (Lys-235) is an N6-(pyridoxal phosphate)lysine.

This sequence belongs to the class-II pyridoxal-phosphate-dependent aminotransferase family. Histidinol-phosphate aminotransferase subfamily. In terms of assembly, homodimer. Pyridoxal 5'-phosphate is required as a cofactor.

The catalysed reaction is L-histidinol phosphate + 2-oxoglutarate = 3-(imidazol-4-yl)-2-oxopropyl phosphate + L-glutamate. It participates in amino-acid biosynthesis; L-histidine biosynthesis; L-histidine from 5-phospho-alpha-D-ribose 1-diphosphate: step 7/9. The polypeptide is Histidinol-phosphate aminotransferase 1 (Psychrobacter arcticus (strain DSM 17307 / VKM B-2377 / 273-4)).